The sequence spans 354 residues: Histidinol-phosphate aminotransferase (354 aa).

Lys210 is subject to N6-(pyridoxal phosphate)lysine.

It belongs to the class-II pyridoxal-phosphate-dependent aminotransferase family. Histidinol-phosphate aminotransferase subfamily. As to quaternary structure, homodimer. Pyridoxal 5'-phosphate serves as cofactor.

It catalyses the reaction L-histidinol phosphate + 2-oxoglutarate = 3-(imidazol-4-yl)-2-oxopropyl phosphate + L-glutamate. The protein operates within amino-acid biosynthesis; L-histidine biosynthesis; L-histidine from 5-phospho-alpha-D-ribose 1-diphosphate: step 7/9. This chain is Histidinol-phosphate aminotransferase, found in Clostridium botulinum (strain Okra / Type B1).